Here is a 342-residue protein sequence, read N- to C-terminus: Manganese-dependent ADP-ribose/CDP-alcohol diphosphatase (342 aa).

Met1 bears the N-acetylmethionine mark. Zn(2+)-binding residues include Asp25, Gln27, Asp74, Asn110, His241, His278, and His280.

It belongs to the ADPRibase-Mn family. In terms of assembly, monomer. It depends on Mg(2+) as a cofactor.

It catalyses the reaction CDP-choline + H2O = phosphocholine + CMP + 2 H(+). It carries out the reaction ADP-D-ribose + H2O = D-ribose 5-phosphate + AMP + 2 H(+). The enzyme catalyses CDP-glycerol + H2O = sn-glycerol 3-phosphate + CMP + 2 H(+). Its function is as follows. Hydrolyzes ADP-ribose, IDP-ribose, CDP-glycerol, CDP-choline and CDP-ethanolamine, but not other non-reducing ADP-sugars or CDP-glucose. May be involved in immune cell signaling as suggested by the second-messenger role of ADP-ribose, which activates TRPM2 as a mediator of oxidative/nitrosative stress. This chain is Manganese-dependent ADP-ribose/CDP-alcohol diphosphatase (ADPRM), found in Homo sapiens (Human).